The sequence spans 825 residues: Zinc finger protein 229 (825 aa).

Residues 1–26 (METLTSRHEKRALHSQASAISQDREE) form a disordered region. Positions 34 to 108 (LSFKDVAVVF…SHKELSSCKI (75 aa)) constitute a KRAB domain. Residues 291 to 315 (KLCQYDEFSEGLRHSAHLNRHQRVP) form a C2H2-type 1; degenerate zinc finger. 7 consecutive C2H2-type zinc fingers follow at residues 349 to 371 (YRCD…QGVH), 377 to 399 (YKCE…QRVH), 405 to 427 (YKCS…QRLH), 433 to 455 (YTCS…QHIH), 461 to 483 (YSCG…QKTH), 489 to 511 (YQCD…QRVH), and 517 to 539 (YKCN…QRLH). Lysine 543 participates in a covalent cross-link: Glycyl lysine isopeptide (Lys-Gly) (interchain with G-Cter in SUMO2). C2H2-type zinc fingers lie at residues 545–566 (YKCE…QRVH), 572–594 (YKCS…QRVH), 600–622 (YVCD…QRVH), 628–650 (YKCA…QRVH), 656–678 (YRCQ…QRVH), 684–706 (YTCD…QRLH), 712–734 (YTCC…KRVH), 740–762 (YRCH…QRVH), 768–790 (YKCE…QRVH), and 796–818 (YTCG…QRVH).

Belongs to the krueppel C2H2-type zinc-finger protein family.

Its subcellular location is the nucleus. Functionally, may be involved in transcriptional regulation. In Homo sapiens (Human), this protein is Zinc finger protein 229.